We begin with the raw amino-acid sequence, 86 residues long: uncharacterized protein (86 aa).

Retina-specific.

This is an uncharacterized protein from Homo sapiens (Human).